We begin with the raw amino-acid sequence, 264 residues long: 3-methyl-2-oxobutanoate hydroxymethyltransferase 2 (264 aa).

Mg(2+) contacts are provided by aspartate 44 and aspartate 83. 3-methyl-2-oxobutanoate contacts are provided by residues 44–45 (DS), aspartate 83, and lysine 111. Residue glutamate 113 coordinates Mg(2+). Glutamate 180 acts as the Proton acceptor in catalysis.

The protein belongs to the PanB family. In terms of assembly, homodecamer; pentamer of dimers. The cofactor is Mg(2+).

It localises to the cytoplasm. It catalyses the reaction 3-methyl-2-oxobutanoate + (6R)-5,10-methylene-5,6,7,8-tetrahydrofolate + H2O = 2-dehydropantoate + (6S)-5,6,7,8-tetrahydrofolate. It participates in cofactor biosynthesis; (R)-pantothenate biosynthesis; (R)-pantoate from 3-methyl-2-oxobutanoate: step 1/2. Catalyzes the reversible reaction in which hydroxymethyl group from 5,10-methylenetetrahydrofolate is transferred onto alpha-ketoisovalerate to form ketopantoate. This Hahella chejuensis (strain KCTC 2396) protein is 3-methyl-2-oxobutanoate hydroxymethyltransferase 2.